The primary structure comprises 1296 residues: Protein STU1 (1296 aa).

Disordered stretches follow at residues 258-287, 735-793, 888-946, and 953-972; these read ATSA…HGAD, LSQT…PPVT, ALQQ…HISA, and TTSH…TNGV. Residues 277-287 show a composition bias toward polar residues; that stretch reads RSQFNSSHGAD. Composition is skewed to low complexity over residues 755–782, 900–919, and 933–946; these read SARS…GAAS, TIST…ASAS, and HSPS…HISA. The span at 953 to 964 shows a compositional bias: polar residues; it reads TTSHRVLSSTPS.

This sequence belongs to the CLASP family. As to quaternary structure, interacts with microtubules.

The protein localises to the cytoplasm. It is found in the cytoskeleton. The protein resides in the nucleus. It localises to the spindle. Microtubule binding protein that promotes the stabilization of dynamic microtubules. Required for mitotic spindle formation. In Mycosarcoma maydis (Corn smut fungus), this protein is Protein STU1 (STU1).